The following is an 89-amino-acid chain: Small ribosomal subunit protein uS15 (89 aa).

The span at 1–20 (MSITAERKAELIKTHARGEA) shows a compositional bias: basic and acidic residues. Residues 1 to 24 (MSITAERKAELIKTHARGEADTGS) form a disordered region.

Belongs to the universal ribosomal protein uS15 family. Part of the 30S ribosomal subunit. Forms a bridge to the 50S subunit in the 70S ribosome, contacting the 23S rRNA.

Its function is as follows. One of the primary rRNA binding proteins, it binds directly to 16S rRNA where it helps nucleate assembly of the platform of the 30S subunit by binding and bridging several RNA helices of the 16S rRNA. Forms an intersubunit bridge (bridge B4) with the 23S rRNA of the 50S subunit in the ribosome. This is Small ribosomal subunit protein uS15 from Phenylobacterium zucineum (strain HLK1).